Here is a 53-residue protein sequence, read N- to C-terminus: UPF0391 membrane protein PA5482 (53 aa).

2 helical membrane passes run tryptophan 4–alanine 24 and glycine 29–glycine 49.

Belongs to the UPF0391 family.

The protein resides in the cell membrane. The protein is UPF0391 membrane protein PA5482 of Pseudomonas aeruginosa (strain ATCC 15692 / DSM 22644 / CIP 104116 / JCM 14847 / LMG 12228 / 1C / PRS 101 / PAO1).